Consider the following 297-residue polypeptide: Bifunctional protein FolD (297 aa).

NADP(+) contacts are provided by residues 167–169 (GRS) and I233.

It belongs to the tetrahydrofolate dehydrogenase/cyclohydrolase family. In terms of assembly, homodimer.

It carries out the reaction (6R)-5,10-methylene-5,6,7,8-tetrahydrofolate + NADP(+) = (6R)-5,10-methenyltetrahydrofolate + NADPH. The catalysed reaction is (6R)-5,10-methenyltetrahydrofolate + H2O = (6R)-10-formyltetrahydrofolate + H(+). It functions in the pathway one-carbon metabolism; tetrahydrofolate interconversion. Functionally, catalyzes the oxidation of 5,10-methylenetetrahydrofolate to 5,10-methenyltetrahydrofolate and then the hydrolysis of 5,10-methenyltetrahydrofolate to 10-formyltetrahydrofolate. The chain is Bifunctional protein FolD from Zymomonas mobilis subsp. mobilis (strain ATCC 31821 / ZM4 / CP4).